We begin with the raw amino-acid sequence, 334 residues long: D-alanine--D-alanine ligase (334 aa).

Residues 121–327 (KLWYDALDIP…FSEFLVQCVT (207 aa)) enclose the ATP-grasp domain. 151 to 206 (AFGHWGSIFVKAARQGSSVGCYKVTTEDQIAPAIEAAFGFSEQVLVEQAVKPRELE) is a binding site for ATP. Mg(2+)-binding residues include Asp281, Glu294, and Asn296.

The protein belongs to the D-alanine--D-alanine ligase family. Requires Mg(2+) as cofactor. Mn(2+) is required as a cofactor.

It localises to the cytoplasm. It catalyses the reaction 2 D-alanine + ATP = D-alanyl-D-alanine + ADP + phosphate + H(+). It functions in the pathway cell wall biogenesis; peptidoglycan biosynthesis. Cell wall formation. The sequence is that of D-alanine--D-alanine ligase from Vibrio cholerae serotype O1 (strain ATCC 39315 / El Tor Inaba N16961).